Here is a 505-residue protein sequence, read N- to C-terminus: Lysine--tRNA ligase (505 aa).

2 residues coordinate Mg(2+): glutamate 415 and glutamate 422.

Belongs to the class-II aminoacyl-tRNA synthetase family. As to quaternary structure, homodimer. Requires Mg(2+) as cofactor.

The protein resides in the cytoplasm. It catalyses the reaction tRNA(Lys) + L-lysine + ATP = L-lysyl-tRNA(Lys) + AMP + diphosphate. This is Lysine--tRNA ligase from Citrobacter koseri (strain ATCC BAA-895 / CDC 4225-83 / SGSC4696).